The primary structure comprises 110 residues: T cell receptor alpha variable 22 (110 aa).

The first 21 residues, 1-21 (MKRILGALLGLLSAQVCCVRG), serve as a signal peptide directing secretion. The Ig-like domain occupies 22-110 (IQVEQSPPDL…DSGVYFCAVE (89 aa)). 2 N-linked (GlcNAc...) asparagine glycosylation sites follow: Asn38 and Asn44. Cys43 and Cys107 form a disulfide bridge.

In terms of assembly, alpha-beta TR is a heterodimer composed of an alpha and beta chain; disulfide-linked. The alpha-beta TR is associated with the transmembrane signaling CD3 coreceptor proteins to form the TR-CD3 (TcR or TCR). The assembly of alpha-beta TR heterodimers with CD3 occurs in the endoplasmic reticulum where a single alpha-beta TR heterodimer associates with one CD3D-CD3E heterodimer, one CD3G-CD3E heterodimer and one CD247 homodimer forming a stable octameric structure. CD3D-CD3E and CD3G-CD3E heterodimers preferentially associate with TR alpha and TR beta chains, respectively. The association of the CD247 homodimer is the last step of TcR assembly in the endoplasmic reticulum and is required for transport to the cell surface.

The protein localises to the cell membrane. In terms of biological role, v region of the variable domain of T cell receptor (TR) alpha chain that participates in the antigen recognition. Alpha-beta T cell receptors are antigen specific receptors which are essential to the immune response and are present on the cell surface of T lymphocytes. Recognize peptide-major histocompatibility (MH) (pMH) complexes that are displayed by antigen presenting cells (APC), a prerequisite for efficient T cell adaptive immunity against pathogens. Binding of alpha-beta TR to pMH complex initiates TR-CD3 clustering on the cell surface and intracellular activation of LCK that phosphorylates the ITAM motifs of CD3G, CD3D, CD3E and CD247 enabling the recruitment of ZAP70. In turn ZAP70 phosphorylates LAT, which recruits numerous signaling molecules to form the LAT signalosome. The LAT signalosome propagates signal branching to three major signaling pathways, the calcium, the mitogen-activated protein kinase (MAPK) kinase and the nuclear factor NF-kappa-B (NF-kB) pathways, leading to the mobilization of transcription factors that are critical for gene expression and essential for T cell growth and differentiation. The T cell repertoire is generated in the thymus, by V-(D)-J rearrangement. This repertoire is then shaped by intrathymic selection events to generate a peripheral T cell pool of self-MH restricted, non-autoaggressive T cells. Post-thymic interaction of alpha-beta TR with the pMH complexes shapes TR structural and functional avidity. This chain is T cell receptor alpha variable 22, found in Homo sapiens (Human).